A 490-amino-acid polypeptide reads, in one-letter code: 3-octaprenyl-4-hydroxybenzoate carboxy-lyase (490 aa).

Residue Asn172 coordinates Mn(2+). Prenylated FMN is bound by residues 175 to 177 (IYR), 189 to 191 (RWL), and 194 to 195 (RG). Glu238 contacts Mn(2+). The active-site Proton donor is the Asp287.

This sequence belongs to the UbiD family. As to quaternary structure, homohexamer. Prenylated FMN is required as a cofactor. Requires Mn(2+) as cofactor.

It localises to the cell membrane. It carries out the reaction a 4-hydroxy-3-(all-trans-polyprenyl)benzoate + H(+) = a 2-(all-trans-polyprenyl)phenol + CO2. It functions in the pathway cofactor biosynthesis; ubiquinone biosynthesis. Its function is as follows. Catalyzes the decarboxylation of 3-octaprenyl-4-hydroxy benzoate to 2-octaprenylphenol, an intermediate step in ubiquinone biosynthesis. The sequence is that of 3-octaprenyl-4-hydroxybenzoate carboxy-lyase from Saccharophagus degradans (strain 2-40 / ATCC 43961 / DSM 17024).